A 598-amino-acid polypeptide reads, in one-letter code: Sulfoacetaldehyde acetyltransferase (598 aa).

The protein belongs to the TPP enzyme family. Homotetramer. Mg(2+) serves as cofactor. The cofactor is thiamine diphosphate.

Its subcellular location is the cytoplasm. The catalysed reaction is acetyl phosphate + sulfite + H(+) = sulfoacetaldehyde + phosphate. The protein operates within organosulfur degradation; taurine degradation via aerobic pathway; acetyl phosphate and sulfite from taurine: step 2/2. The polypeptide is Sulfoacetaldehyde acetyltransferase (Castellaniella defragrans (Alcaligenes defragrans)).